We begin with the raw amino-acid sequence, 572 residues long: Putative acyl-CoA synthetase CCNA_01223 (572 aa).

This sequence belongs to the ATP-dependent AMP-binding enzyme family.

It functions in the pathway lipid metabolism; sphingolipid metabolism. Its function is as follows. Involved in de novo bacterial ceramide synthesis. This Caulobacter vibrioides (strain NA1000 / CB15N) (Caulobacter crescentus) protein is Putative acyl-CoA synthetase CCNA_01223.